Consider the following 174-residue polypeptide: Peptide deformylase (174 aa).

Fe cation contacts are provided by Cys-91 and His-133. Glu-134 is an active-site residue. Fe cation is bound at residue His-137.

The protein belongs to the polypeptide deformylase family. Requires Fe(2+) as cofactor.

It catalyses the reaction N-terminal N-formyl-L-methionyl-[peptide] + H2O = N-terminal L-methionyl-[peptide] + formate. Its function is as follows. Removes the formyl group from the N-terminal Met of newly synthesized proteins. Requires at least a dipeptide for an efficient rate of reaction. N-terminal L-methionine is a prerequisite for activity but the enzyme has broad specificity at other positions. This chain is Peptide deformylase, found in Fusobacterium nucleatum subsp. nucleatum (strain ATCC 25586 / DSM 15643 / BCRC 10681 / CIP 101130 / JCM 8532 / KCTC 2640 / LMG 13131 / VPI 4355).